A 69-amino-acid chain; its full sequence is Probable rubredoxin HupI (69 aa).

Residues 16–67 (VTRLECGICWTVYDPADGDDVAQIAPGTPFAALPEEWHCPNCDAPKSKFMAI) enclose the Rubredoxin-like domain. Residues Cys-21, Cys-24, Cys-54, and Cys-57 each contribute to the Fe cation site.

Belongs to the rubredoxin family. The cofactor is Fe(3+).

Its function is as follows. Could be an electron transport intermediate in hydrogen oxidation. This Bradyrhizobium diazoefficiens (strain JCM 10833 / BCRC 13528 / IAM 13628 / NBRC 14792 / USDA 110) protein is Probable rubredoxin HupI (hupI).